Reading from the N-terminus, the 405-residue chain is Argininosuccinate synthase (405 aa).

ATP-binding positions include 11–19 (AYSGGLDTS) and Ala38. The L-citrulline site is built by Tyr91 and Ser96. Gly121 is an ATP binding site. L-aspartate contacts are provided by Thr123, Asn127, and Asp128. Residue Asn127 coordinates L-citrulline. L-citrulline contacts are provided by Arg131, Ser182, Ser191, Glu267, and Tyr279.

This sequence belongs to the argininosuccinate synthase family. Type 1 subfamily. In terms of assembly, homotetramer.

It is found in the cytoplasm. It catalyses the reaction L-citrulline + L-aspartate + ATP = 2-(N(omega)-L-arginino)succinate + AMP + diphosphate + H(+). The protein operates within amino-acid biosynthesis; L-arginine biosynthesis; L-arginine from L-ornithine and carbamoyl phosphate: step 2/3. In Sphingopyxis alaskensis (strain DSM 13593 / LMG 18877 / RB2256) (Sphingomonas alaskensis), this protein is Argininosuccinate synthase.